Reading from the N-terminus, the 195-residue chain is Cbp/p300-interacting transactivator 1 (195 aa).

2 disordered regions span residues 1–24 and 51–149; these read MPTM…NANP and ASNG…SPAI. Residues 54-78 are compositionally biased toward low complexity; that stretch reads GTKASGAPTSSSGSPSPISSSTATP. The span at 97-106 shows a compositional bias: polar residues; that stretch reads MQLQKLNSQY. Positions 137–148 are enriched in low complexity; sequence SLSPSAGAQSPA. The Nuclear export signal signature appears at 160–169; the sequence is LMSLVVELGL.

Belongs to the CITED family. As to quaternary structure, interacts (via C-terminus) with CREBBP. Interacts with EGR2. Homodimer. Binds to RBM14. Interacts (via N-terminus) with HSPA8; the interaction suppresses the association of CITED1 with p300/CBP and SMAD-mediated transcription transactivation. Interacts (via C-terminus) with TOX3 (via HGM box); the interaction increases estrogen-response element (ERE)-dependent transcription and protection against cell death. Interacts with ESR1; the interaction occurs in a estrogen-dependent manner. Interacts (unphosphorylated form preferentially and via C-terminus) with EP300. Phosphorylated. Phosphorylation changes in a cell cycle-dependent manner and reduces its transcriptional cofactor activity.

It localises to the nucleus. It is found in the cytoplasm. In terms of biological role, transcriptional coactivator of the p300/CBP-mediated transcription complex. Enhances SMAD-mediated transcription by strengthening the functional link between the DNA-binding SMAD transcription factors and the p300/CBP transcription coactivator complex. Stimulates estrogen-dependent transactivation activity mediated by estrogen receptors signaling; stabilizes the interaction of estrogen receptor ESR1 and histone acetyltransferase EP300. Positively regulates TGF-beta signaling through its association with the SMAD/p300/CBP-mediated transcriptional coactivator complex. Induces transcription from estrogen-responsive promoters and protection against cell death. Potentiates EGR2-mediated transcriptional activation activity from the ERBB2 promoter. Acts as an inhibitor of osteoblastic mineralization through a cAMP-dependent parathyroid hormone receptor signaling. May play a role in pigmentation of melanocytes. Associates with chromatin to the estrogen-responsive TGF-alpha promoter region in a estrogen-dependent manner. The sequence is that of Cbp/p300-interacting transactivator 1 (CITED1) from Bos taurus (Bovine).